The chain runs to 323 residues: Aldo-keto reductase family 1 member C18 (323 aa).

Residues 20-24 and Asp50 contribute to the NADP(+) site; that span reads GFGTY. Tyr55 serves as the catalytic Proton donor. His117 lines the substrate pocket. Residues 166 to 167, Gln190, 216 to 221, and 270 to 280 contribute to the NADP(+) site; these read SN, YGALGT, and KSFNEERIREN.

This sequence belongs to the aldo/keto reductase family. In terms of assembly, monomer.

The protein resides in the cytoplasm. It catalyses the reaction (17R,20S)-17,20-dihydroxypregn-4-en-3-one + NADP(+) = 17alpha-hydroxyprogesterone + NADPH + H(+). It carries out the reaction (17R,20S)-17,20-dihydroxypregn-4-en-3-one + NAD(+) = 17alpha-hydroxyprogesterone + NADH + H(+). Functionally, catalyzes the conversion of progesterone into 20-alpha-dihydroprogesterone (20 alpha-OHP). The sequence is that of Aldo-keto reductase family 1 member C18 (Akr1c18) from Mus musculus (Mouse).